The primary structure comprises 185 residues: Elongation factor P (185 aa).

Belongs to the elongation factor P family.

The protein resides in the cytoplasm. It participates in protein biosynthesis; polypeptide chain elongation. Involved in peptide bond synthesis. Stimulates efficient translation and peptide-bond synthesis on native or reconstituted 70S ribosomes in vitro. Probably functions indirectly by altering the affinity of the ribosome for aminoacyl-tRNA, thus increasing their reactivity as acceptors for peptidyl transferase. This is Elongation factor P from Acetivibrio thermocellus (strain ATCC 27405 / DSM 1237 / JCM 9322 / NBRC 103400 / NCIMB 10682 / NRRL B-4536 / VPI 7372) (Clostridium thermocellum).